A 196-amino-acid chain; its full sequence is Small ribosomal subunit protein uS4c (196 aa).

Residues 89–169 (MRLDNIIFRL…LPKHLTIDTV (81 aa)) form the S4 RNA-binding domain.

This sequence belongs to the universal ribosomal protein uS4 family. As to quaternary structure, part of the 30S ribosomal subunit. Contacts protein S5. The interaction surface between S4 and S5 is involved in control of translational fidelity.

The protein resides in the plastid. It is found in the chloroplast. One of the primary rRNA binding proteins, it binds directly to 16S rRNA where it nucleates assembly of the body of the 30S subunit. Functionally, with S5 and S12 plays an important role in translational accuracy. The polypeptide is Small ribosomal subunit protein uS4c (rps4) (Stipellula capensis (Cape rice grass)).